The sequence spans 628 residues: Beta-galactosidase large subunit (628 aa).

The Proton donor role is filled by E468. E536 serves as the catalytic Nucleophile.

It belongs to the glycosyl hydrolase 2 family. Heterodimer of a large (LacL) and a small subunit (LacM).

It carries out the reaction Hydrolysis of terminal non-reducing beta-D-galactose residues in beta-D-galactosides.. Its function is as follows. Component of a beta-galactosidase. The sequence is that of Beta-galactosidase large subunit from Lactobacillus helveticus (Lactobacillus suntoryeus).